A 117-amino-acid polypeptide reads, in one-letter code: MALKIRLSRGGSKKRPYYHIVVADARSPRDGRFLERVGAWDPMLPKDGPRVKLNEERIQYWLGQGAQPTDRVLRFLDAVGLKKRPNRNNPHKGQPGKKAQERISAAKQVAEAESAPV.

Basic residues predominate over residues L81–P90. The tract at residues L81–V117 is disordered.

It belongs to the bacterial ribosomal protein bS16 family.

The chain is Small ribosomal subunit protein bS16 from Bartonella quintana (strain Toulouse) (Rochalimaea quintana).